The primary structure comprises 203 residues: MINILHVIAGLALASVGVDARQVGVGADVLHAVENTIDSITGVEASHSALEVGGGITNTDNWETFAGLPLTGAIKVNDGNSVVHISAYFPEDRRGKYSYYAATSDELQKTVVFLFVVEDDGLLLQAVKNNAHYPVTNGMYLASHRYYPKDSKYEGMVRLMVHADPAKAVIWEFVTVGGKQYLKVKENRDYTALQIPRHHPRPG.

A signal peptide spans 1–20 (MINILHVIAGLALASVGVDA). The propeptide occupies 21–53 (RQVGVGADVLHAVENTIDSITGVEASHSALEVG).

As to quaternary structure, monomer.

In terms of biological role, N-acetyl-D-glucosamine-specific lectin. Specifically agglutinates rabbit erythrocytes. The chain is Lectin (UPL1) from Ulva pertusa (Sea lettuce).